Reading from the N-terminus, the 597-residue chain is DNA polymerase III subunit gamma/tau (597 aa).

44 to 51 is a binding site for ATP; it reads GERGTGKT. The Zn(2+) site is built by C63, C72, C75, and C78.

The protein belongs to the DnaX/STICHEL family. In terms of assembly, DNA polymerase III contains a core (composed of alpha, epsilon and theta chains) that associates with a tau subunit. This core dimerizes to form the POLIII' complex. PolIII' associates with the gamma complex (composed of gamma, delta, delta', psi and chi chains) and with the beta chain to form the complete DNA polymerase III complex.

The catalysed reaction is DNA(n) + a 2'-deoxyribonucleoside 5'-triphosphate = DNA(n+1) + diphosphate. DNA polymerase III is a complex, multichain enzyme responsible for most of the replicative synthesis in bacteria. This DNA polymerase also exhibits 3' to 5' exonuclease activity. This is DNA polymerase III subunit gamma/tau (dnaX) from Mycoplasma genitalium (strain ATCC 33530 / DSM 19775 / NCTC 10195 / G37) (Mycoplasmoides genitalium).